The sequence spans 454 residues: tRNA-2-methylthio-N(6)-dimethylallyladenosine synthase (454 aa).

Residues 6–122 (RRYHITTFGC…LQDLLQEVLA (117 aa)) enclose the MTTase N-terminal domain. Positions 15, 51, 85, 157, 161, and 164 each coordinate [4Fe-4S] cluster. Residues 143-380 (RESTVTAWVN…NHLVAIKAAE (238 aa)) enclose the Radical SAM core domain. One can recognise a TRAM domain in the interval 383-447 (QRYLGRIEEV…AFSLTGEPVK (65 aa)).

It belongs to the methylthiotransferase family. MiaB subfamily. In terms of assembly, monomer. Requires [4Fe-4S] cluster as cofactor.

Its subcellular location is the cytoplasm. The catalysed reaction is N(6)-dimethylallyladenosine(37) in tRNA + (sulfur carrier)-SH + AH2 + 2 S-adenosyl-L-methionine = 2-methylsulfanyl-N(6)-dimethylallyladenosine(37) in tRNA + (sulfur carrier)-H + 5'-deoxyadenosine + L-methionine + A + S-adenosyl-L-homocysteine + 2 H(+). Functionally, catalyzes the methylthiolation of N6-(dimethylallyl)adenosine (i(6)A), leading to the formation of 2-methylthio-N6-(dimethylallyl)adenosine (ms(2)i(6)A) at position 37 in tRNAs that read codons beginning with uridine. The polypeptide is tRNA-2-methylthio-N(6)-dimethylallyladenosine synthase (Gloeothece citriformis (strain PCC 7424) (Cyanothece sp. (strain PCC 7424))).